The primary structure comprises 266 residues: Type III pantothenate kinase (266 aa).

Residue 6 to 13 (DAGNTNIV) coordinates ATP. Substrate contacts are provided by residues tyrosine 100 and 107–110 (GADR). The active-site Proton acceptor is aspartate 109. Aspartate 129 contacts K(+). Threonine 132 provides a ligand contact to ATP. Position 184 (threonine 184) interacts with substrate.

Belongs to the type III pantothenate kinase family. As to quaternary structure, homodimer. NH4(+) serves as cofactor. The cofactor is K(+).

The protein localises to the cytoplasm. The enzyme catalyses (R)-pantothenate + ATP = (R)-4'-phosphopantothenate + ADP + H(+). It functions in the pathway cofactor biosynthesis; coenzyme A biosynthesis; CoA from (R)-pantothenate: step 1/5. In terms of biological role, catalyzes the phosphorylation of pantothenate (Pan), the first step in CoA biosynthesis. This Clostridium beijerinckii (strain ATCC 51743 / NCIMB 8052) (Clostridium acetobutylicum) protein is Type III pantothenate kinase.